Here is a 232-residue protein sequence, read N- to C-terminus: Phosphatidylserine decarboxylase proenzyme (232 aa).

The Schiff-base intermediate with substrate; via pyruvic acid role is filled by Ser-190. Position 190 is a pyruvic acid (Ser); by autocatalysis (Ser-190).

The protein belongs to the phosphatidylserine decarboxylase family. PSD-A subfamily. Heterodimer of a large membrane-associated beta subunit and a small pyruvoyl-containing alpha subunit. Pyruvate is required as a cofactor. In terms of processing, is synthesized initially as an inactive proenzyme. Formation of the active enzyme involves a self-maturation process in which the active site pyruvoyl group is generated from an internal serine residue via an autocatalytic post-translational modification. Two non-identical subunits are generated from the proenzyme in this reaction, and the pyruvate is formed at the N-terminus of the alpha chain, which is derived from the carboxyl end of the proenzyme. The post-translation cleavage follows an unusual pathway, termed non-hydrolytic serinolysis, in which the side chain hydroxyl group of the serine supplies its oxygen atom to form the C-terminus of the beta chain, while the remainder of the serine residue undergoes an oxidative deamination to produce ammonia and the pyruvoyl prosthetic group on the alpha chain.

Its subcellular location is the cell membrane. It carries out the reaction a 1,2-diacyl-sn-glycero-3-phospho-L-serine + H(+) = a 1,2-diacyl-sn-glycero-3-phosphoethanolamine + CO2. The protein operates within phospholipid metabolism; phosphatidylethanolamine biosynthesis; phosphatidylethanolamine from CDP-diacylglycerol: step 2/2. In terms of biological role, catalyzes the formation of phosphatidylethanolamine (PtdEtn) from phosphatidylserine (PtdSer). This chain is Phosphatidylserine decarboxylase proenzyme, found in Rhodopseudomonas palustris (strain BisA53).